A 201-amino-acid polypeptide reads, in one-letter code: Histidinol dehydrogenase (201 aa).

It belongs to the histidinol dehydrogenase family. As to quaternary structure, homodimer. The cofactor is Zn(2+).

It carries out the reaction L-histidinol + 2 NAD(+) + H2O = L-histidine + 2 NADH + 3 H(+). It functions in the pathway amino-acid biosynthesis; L-histidine biosynthesis; L-histidine from 5-phospho-alpha-D-ribose 1-diphosphate: step 9/9. Its function is as follows. Catalyzes the sequential NAD-dependent oxidations of L-histidinol to L-histidinaldehyde and then to L-histidine. The polypeptide is Histidinol dehydrogenase (hisD) (Buchnera aphidicola subsp. Schlechtendalia chinensis).